A 335-amino-acid chain; its full sequence is MVNEKVNPFDLASVSPLVLGGAILNQQYTDEPESIPLEDIIKYAFSHGINAIDTSPYYGPSEVLYGRALSNLRNEFPRDTYFICTKVGRIGAEEFNYSRDFVRFSVHRSCERLHTTYLDLVYLHDVEFVKFPDILEALKELRTLKNKGVIKNFGISGYPIDFITWLAEYCSTEESDIGSLDAVLSYCNLNLQNNKLLNFRERLLRNAKLKMVCNASILSMSLLRSQETRQFHPCSHELRECASQAAKYCQEQNVDLADLATRYAISEWVGKGPVVLGVSSMEELKLALDNYEIVKSNGNRLSSKDGQLVEYIQKNIFKEHFNEEWSSGIPHPEMI.

Tyrosine 58 acts as the Proton donor in catalysis. Histidine 124 contacts substrate. 221–287 (SLLRSQETRQ…VSSMEELKLA (67 aa)) lines the NAD(+) pocket.

This sequence belongs to the aldo/keto reductase family. Aldo/keto reductase 2 subfamily.

It carries out the reaction D-arabinose + NAD(+) = D-arabinono-1,4-lactone + NADH + H(+). The chain is D-arabinose 1-dehydrogenase (ARA2) from Saccharomyces cerevisiae (strain ATCC 204508 / S288c) (Baker's yeast).